A 1068-amino-acid chain; its full sequence is Carbamoyl phosphate synthase large chain (1068 aa).

Positions 1 to 401 (MPLNKDIKKV…AFLKGTRSLE (401 aa)) are carboxyphosphate synthetic domain. The ATP site is built by arginine 129, arginine 169, glycine 175, glycine 176, lysine 208, valine 210, glutamate 215, glycine 241, isoleucine 242, histidine 243, glutamine 284, and glutamate 298. An ATP-grasp 1 domain is found at 133–327 (RNVMSRINEP…IAKVASKIAL (195 aa)). Mg(2+) contacts are provided by glutamine 284, glutamate 298, and asparagine 300. 3 residues coordinate Mn(2+): glutamine 284, glutamate 298, and asparagine 300. Positions 402–549 (IGKYSLEHKK…YSTYDVYDEV (148 aa)) are oligomerization domain. The carbamoyl phosphate synthetic domain stretch occupies residues 550-932 (EVSKNKKVIV…ALYKGFIGAN (383 aa)). The ATP-grasp 2 domain occupies 674 to 864 (DELLEKLKIA…IVDIATRVML (191 aa)). ATP is bound by residues arginine 710, lysine 749, leucine 751, glutamate 755, glycine 780, valine 781, histidine 782, serine 783, glutamine 823, and glutamate 835. The Mg(2+) site is built by glutamine 823, glutamate 835, and asparagine 837. Mn(2+) contacts are provided by glutamine 823, glutamate 835, and asparagine 837. The 136-residue stretch at 933–1068 (ISIKKEKGTV…ETLYIFDLSN (136 aa)) folds into the MGS-like domain. The interval 933 to 1068 (ISIKKEKGTV…ETLYIFDLSN (136 aa)) is allosteric domain.

The protein belongs to the CarB family. As to quaternary structure, composed of two chains; the small (or glutamine) chain promotes the hydrolysis of glutamine to ammonia, which is used by the large (or ammonia) chain to synthesize carbamoyl phosphate. Tetramer of heterodimers (alpha,beta)4. It depends on Mg(2+) as a cofactor. Requires Mn(2+) as cofactor.

The catalysed reaction is hydrogencarbonate + L-glutamine + 2 ATP + H2O = carbamoyl phosphate + L-glutamate + 2 ADP + phosphate + 2 H(+). It carries out the reaction hydrogencarbonate + NH4(+) + 2 ATP = carbamoyl phosphate + 2 ADP + phosphate + 2 H(+). The protein operates within amino-acid biosynthesis; L-arginine biosynthesis; carbamoyl phosphate from bicarbonate: step 1/1. Its pathway is pyrimidine metabolism; UMP biosynthesis via de novo pathway; (S)-dihydroorotate from bicarbonate: step 1/3. Large subunit of the glutamine-dependent carbamoyl phosphate synthetase (CPSase). CPSase catalyzes the formation of carbamoyl phosphate from the ammonia moiety of glutamine, carbonate, and phosphate donated by ATP, constituting the first step of 2 biosynthetic pathways, one leading to arginine and/or urea and the other to pyrimidine nucleotides. The large subunit (synthetase) binds the substrates ammonia (free or transferred from glutamine from the small subunit), hydrogencarbonate and ATP and carries out an ATP-coupled ligase reaction, activating hydrogencarbonate by forming carboxy phosphate which reacts with ammonia to form carbamoyl phosphate. In Clostridium botulinum (strain Langeland / NCTC 10281 / Type F), this protein is Carbamoyl phosphate synthase large chain.